The sequence spans 766 residues: Sucrose synthase (766 aa).

Residues 220 to 698 (MVFNVVILSV…GLLRIKERYT (479 aa)) form a GT-B glycosyltransferase region.

The protein belongs to the glycosyltransferase 1 family. Plant sucrose synthase subfamily. In terms of tissue distribution, expressed most predominantly in tap root.

The enzyme catalyses an NDP-alpha-D-glucose + D-fructose = a ribonucleoside 5'-diphosphate + sucrose + H(+). Functionally, sucrose-cleaving enzyme that provides UDP-glucose and fructose for various metabolic pathways. The sequence is that of Sucrose synthase (SS1) from Beta vulgaris (Sugar beet).